Reading from the N-terminus, the 105-residue chain is UPF0145 protein lpg0197 (105 aa).

The protein belongs to the UPF0145 family.

In Legionella pneumophila subsp. pneumophila (strain Philadelphia 1 / ATCC 33152 / DSM 7513), this protein is UPF0145 protein lpg0197.